The sequence spans 612 residues: Phosphopentomutase (612 aa).

Ala-2 carries the N-acetylalanine modification. Residues Arg-63 and Ser-165 each contribute to the alpha-D-glucose 1,6-bisphosphate site. Residue Ser-165 is the Phosphoserine intermediate of the active site. The Mg(2+) site is built by Ser-165, Asp-322, Asp-324, and Asp-326. Residue Ser-165 is modified to Phosphoserine. 5 residues coordinate alpha-D-glucose 1,6-bisphosphate: Asp-326, Arg-327, Thr-400, Glu-424, and Lys-438.

This sequence belongs to the phosphohexose mutase family. As to quaternary structure, monomer. It depends on Mg(2+) as a cofactor.

Its subcellular location is the cytoplasm. It localises to the cytosol. The catalysed reaction is alpha-D-ribose 1-phosphate = D-ribose 5-phosphate. The enzyme catalyses 2-deoxy-alpha-D-ribose 1-phosphate = 2-deoxy-D-ribose 5-phosphate. It catalyses the reaction alpha-D-glucose 1-phosphate = alpha-D-glucose 6-phosphate. It carries out the reaction O-phospho-L-seryl-[protein] + alpha-D-glucose 1-phosphate = alpha-D-glucose 1,6-bisphosphate + L-seryl-[protein]. The catalysed reaction is alpha-D-glucose 1,6-bisphosphate + L-seryl-[protein] = O-phospho-L-seryl-[protein] + alpha-D-glucose 6-phosphate. The phosphomutase activity is stimulated by glucose 1,6-bisphosphate. Functionally, catalyzes the conversion of the nucleoside breakdown products ribose-1-phosphate and deoxyribose-1-phosphate to the corresponding 5-phosphopentoses. Catalyzes the reversible isomerization of alpha-D-glucose 1-phosphate to alpha-D-glucose 6-phosphate but with a lower catalytic efficiency. The mechanism proceeds via the intermediate compound alpha-D-glucose 1,6-bisphosphate. In vitro, also has a low glucose 1,6-bisphosphate synthase activity which is most probably not physiologically relevant. This chain is Phosphopentomutase, found in Homo sapiens (Human).